The sequence spans 261 residues: Kallikrein 1-related peptidase b26 (261 aa).

An N-terminal signal peptide occupies residues Met-1 to Ala-18. Residues Pro-19–Arg-24 constitute a propeptide, activation peptide. The 234-residue stretch at Val-25–Met-258 folds into the Peptidase S1 domain. Cystine bridges form between Cys-31-Cys-173, Cys-50-Cys-66, Cys-152-Cys-219, Cys-184-Cys-198, and Cys-209-Cys-234. His-65 serves as the catalytic Charge relay system. Asn-102 carries N-linked (GlcNAc...) asparagine glycosylation. Asp-120 serves as the catalytic Charge relay system. Ser-213 (charge relay system) is an active-site residue.

It belongs to the peptidase S1 family. Kallikrein subfamily.

The enzyme catalyses Preferential cleavage of Arg-|-Xaa bonds in small molecule substrates. Highly selective action to release kallidin (lysyl-bradykinin) from kininogen involves hydrolysis of Met-|-Xaa or Leu-|-Xaa.. Glandular kallikreins cleave Met-Lys and Arg-Ser bonds in kininogen to release Lys-bradykinin. Its function is as follows. Prorenin-converting enzyme cleaves mouse REN-2 prorenin at a dibasic site to yield mature renin. This is Kallikrein 1-related peptidase b26 (Klk1b26) from Mus musculus (Mouse).